Here is a 1441-residue protein sequence, read N- to C-terminus: Tripeptidyl-peptidase 2 (1441 aa).

Residues 62–89 (AESSERSNSSKKTTNKEQSDKSAESRMA) form a disordered region. The span at 75–85 (TNKEQSDKSAE) shows a compositional bias: basic and acidic residues. Residues 107 to 608 (ETGVLNFLQK…HGLLNVEKAF (502 aa)) enclose the Peptidase S8 domain. Catalysis depends on charge relay system residues D131, H359, and S549. Over residues 1139–1155 (TANGAKPKAPATPQAAT) the composition is skewed to low complexity. Disordered regions lie at residues 1139-1190 (TANG…KANA) and 1255-1274 (QKTSPPEAGESADKQKEDQK). The residue at position 1182 (S1182) is a Phosphoserine. Over residues 1265–1274 (SADKQKEDQK) the composition is skewed to basic and acidic residues.

It belongs to the peptidase S8 family. As to quaternary structure, homooligomer; forms a complex of 6 MDa probably composed of 40 subunits. Forms a structure consisting of 2 segmented and twisted strands that form a spindle-shaped structure. Each strand is composed of 10 segments (a segment being a homodimer oriented head to head), stacking of these segments leads to the formation of a twisted single strand. 2 strands compose the fully assembled spindle.

The protein resides in the cytoplasm. It carries out the reaction Release of an N-terminal tripeptide from a polypeptide.. With respect to regulation, inhibited by phenylmethanesulfonyl fluoride (PMSF) and butabindide, but not by peptidase inhibitor pepstatin, EDTA, nor bestatin. Component of the proteolytic cascade acting downstream of the 26S proteasome in the ubiquitin-proteasome pathway. Efficiently cleaves Ala-Ala-Ala-polypeptide and Pro-Pro-Ala-polypeptide, Val-Leu-Lys-polypeptide only at high concentration. Does not cleave Ala-Phe-Pro-polypeptide nor Pro-Leu-Gly-polypeptide. This Drosophila melanogaster (Fruit fly) protein is Tripeptidyl-peptidase 2 (TppII).